An 860-amino-acid chain; its full sequence is Spindle and centriole-associated protein 1 (860 aa).

Disordered regions lie at residues 160–200 (ESVI…SQSN), 232–254 (QSQM…QKAA), and 293–330 (KQLL…SSSN). T236 is subject to Phosphothreonine. Residues 236-249 (TASSGTPSSASPSG) are compositionally biased toward low complexity. Residues 308–330 (PSKQKSSMLSASTASTDLPSSSN) show a composition bias toward polar residues. Residues 383–437 (RYLKESELQLRKEVETRQRLEEALGDHRELIDALTAEVLFLREENTATQARLQQY) are a coiled coil. Residue S646 is modified to Phosphoserine. Positions 729 to 755 (SSMEERIAELNRQSMEARGKLLQLIEQ) form a coiled coil. A phosphoserine mark is found at S765, S769, and S824. Residues 790-860 (IPGAEAPESS…GWFALSTHVS (71 aa)) form a disordered region. Positions 808-824 (SGLNSRRSSGAASNSCS) are enriched in low complexity.

Interacts with CEP120.

The protein resides in the cytoplasm. It is found in the cytoskeleton. Its subcellular location is the microtubule organizing center. The protein localises to the centrosome. It localises to the centriole. The protein resides in the spindle. Regulator required for centriole duplication. for proper bipolar spindle formation and chromosome congression in mitosis. The chain is Spindle and centriole-associated protein 1 (SPICE1) from Bos taurus (Bovine).